The sequence spans 364 residues: RNA-binding protein ZC3H11 (364 aa).

The C3H1-type zinc-finger motif lies at 64 to 92 (RYKTKLCKNFVQYGTCPYDIRCMFAHGEE). Positions 194 to 199 (VRHNPY) match the MKT1-binding motif motif. A disordered region spans residues 340–364 (EQSQSHLKREGNEGRGEGLHMFLSL). Over residues 346–357 (LKREGNEGRGEG) the composition is skewed to basic and acidic residues.

Interacts (via MKT1-binding motif) with MKT1. Interacts with PBP1 (via C-terminus); the interaction is direct. Post-translationally, phosphorylated at the N-terminus. CK1.2-dependent phosphorylation may lead to proteasome-dependent degradation of ZC3H11 in absence of stress.

It is found in the cytoplasm. In terms of biological role, RNA-binding protein involved in regulation of mRNA stability. Binds AU-rich regions in the 3'-UTR of mRNAs and promotes their stabilization by recruiting a MKT1-containing complex. Stabilizes chaperone mRNAs during stress that causes an accumulation of misfolded or unfolded proteins in the cytoplasm. This is RNA-binding protein ZC3H11 from Trypanosoma brucei brucei (strain 927/4 GUTat10.1).